A 54-amino-acid chain; its full sequence is LAAVDCSEHPKPACTLEDRPLCGSDNKIYSNKCDFCNAVLESNGTLTLSHFGKC.

Positions Val4–Cys54 constitute a Kazal-like domain. 3 disulfide bridges follow: Cys6–Cys36, Cys14–Cys33, and Cys22–Cys54. N-linked (GlcNAc...) asparagine glycosylation is present at Asn43.

It localises to the secreted. This Argusianus argus (Great argus) protein is Ovomucoid.